The chain runs to 1044 residues: Isoleucine--tRNA ligase (1044 aa).

The short motif at Pro-49–Thr-59 is the 'HIGH' region element. Residues Lys-591–Ser-595 carry the 'KMSKS' region motif. Lys-594 lines the ATP pocket.

It belongs to the class-I aminoacyl-tRNA synthetase family. IleS type 2 subfamily. As to quaternary structure, monomer. It depends on Zn(2+) as a cofactor.

It localises to the cytoplasm. The enzyme catalyses tRNA(Ile) + L-isoleucine + ATP = L-isoleucyl-tRNA(Ile) + AMP + diphosphate. Its function is as follows. Catalyzes the attachment of isoleucine to tRNA(Ile). As IleRS can inadvertently accommodate and process structurally similar amino acids such as valine, to avoid such errors it has two additional distinct tRNA(Ile)-dependent editing activities. One activity is designated as 'pretransfer' editing and involves the hydrolysis of activated Val-AMP. The other activity is designated 'posttransfer' editing and involves deacylation of mischarged Val-tRNA(Ile). In Methanothermobacter thermautotrophicus (strain ATCC 29096 / DSM 1053 / JCM 10044 / NBRC 100330 / Delta H) (Methanobacterium thermoautotrophicum), this protein is Isoleucine--tRNA ligase.